We begin with the raw amino-acid sequence, 269 residues long: uncharacterized protein (269 aa).

Pro residues predominate over residues 1 to 16 (MTDVPSKPPQTTPPPK). Disordered regions lie at residues 1-110 (MTDV…TISG) and 157-269 (ILQQ…PTIQ). The span at 21–45 (APTTIFSSPPQLPDRSSLNISHTAS) shows a compositional bias: polar residues. A compositionally biased stretch (low complexity) spans 46–58 (TPTLTPTPLQQQQ). The segment covering 80–93 (SFSNSPNRQTQSFI) has biased composition (polar residues). The span at 159–181 (QQPQQSHSPQQQQQQHTPNHQQP) shows a compositional bias: low complexity. Positions 182–195 (LSPQQQKDLAQKRS) are enriched in polar residues. The span at 198-213 (PLPPRPNKNRPLPTPI) shows a compositional bias: pro residues.

This is an uncharacterized protein from Dictyostelium discoideum (Social amoeba).